The primary structure comprises 78 residues: Translational regulator CsrA (78 aa).

Belongs to the CsrA/RsmA family. In terms of assembly, homodimer; the beta-strands of each monomer intercalate to form a hydrophobic core, while the alpha-helices form wings that extend away from the core.

It is found in the cytoplasm. Its function is as follows. A translational regulator that binds mRNA to regulate translation initiation and/or mRNA stability. Usually binds in the 5'-UTR at or near the Shine-Dalgarno sequence preventing ribosome-binding, thus repressing translation. Its main target seems to be the major flagellin gene, while its function is anatagonized by FliW. This Geobacter metallireducens (strain ATCC 53774 / DSM 7210 / GS-15) protein is Translational regulator CsrA.